The primary structure comprises 345 residues: Molybdate/tungstate-binding protein WtpA (345 aa).

The N-terminal stretch at 1 to 27 is a signal peptide; it reads MREGGVMKKRLLALIVAFAVLTAGCLG. Residues 41 to 42, S75, 160 to 162, E218, and Y236 each bind molybdate; these read GS and DPC. Residues 41-42, S75, 160-162, E218, and Y236 contribute to the tungstate site; these read GS and DPC.

Belongs to the bacterial solute-binding protein 1 family. WtpA subfamily. As to quaternary structure, monomer. The complex is composed of two ATP-binding proteins (WtpC), two transmembrane proteins (WtpB) and a solute-binding protein (WtpA).

The protein resides in the cell membrane. Its function is as follows. Part of the ABC transporter complex WtpABC involved in molybdate/tungstate import. Binds tungstate and molybdate, with a preference for tungstate. The protein is Molybdate/tungstate-binding protein WtpA of Pyrococcus furiosus (strain ATCC 43587 / DSM 3638 / JCM 8422 / Vc1).